A 228-amino-acid chain; its full sequence is Homeobox protein Hox-B6a (228 aa).

An Antp-type hexapeptide motif is present at residues V132–Q137. Residues G150–N209 constitute a DNA-binding region (homeobox).

This sequence belongs to the Antp homeobox family.

The protein resides in the nucleus. Sequence-specific transcription factor which is part of a developmental regulatory system that provides cells with specific positional identities on the anterior-posterior axis. This chain is Homeobox protein Hox-B6a (hoxb6a), found in Danio rerio (Zebrafish).